The following is a 293-amino-acid chain: Neugrin (293 aa).

The signal sequence occupies residues 1–18 (MALSLSLFLGGRVRTSLA). A Phosphoserine modification is found at Ser-41. Disordered regions lie at residues 177–210 (DEVS…EGRD) and 224–254 (TTAL…TLPS). The N-linked (GlcNAc...) asparagine glycan is linked to Asn-185. Over residues 198–210 (HSTDAQKKREGRD) the composition is skewed to basic and acidic residues.

Belongs to the neugrin family. Forms a regulatory protein-RNA complex, consisting of RCC1L, NGRN, RPUSD3, RPUSD4, TRUB2, FASTKD2 and 16S mt-rRNA. Interacts with 16S mt-rRNA; this interaction is direct. Expressed in heart, brain, liver and kidney. In brain, mainly expressed in neurons rather than glial cells.

It localises to the nucleus. Its subcellular location is the secreted. The protein localises to the mitochondrion membrane. Plays an essential role in mitochondrial ribosome biogenesis. As a component of a functional protein-RNA module, consisting of RCC1L, NGRN, RPUSD3, RPUSD4, TRUB2, FASTKD2 and 16S mitochondrial ribosomal RNA (16S mt-rRNA), controls 16S mt-rRNA abundance and is required for intra-mitochondrial translation of core subunits of the oxidative phosphorylation system. The chain is Neugrin (Ngrn) from Mus musculus (Mouse).